We begin with the raw amino-acid sequence, 763 residues long: Phosphoglycerol transferase I (763 aa).

4 helical membrane passes run 1–21, 26–46, 77–97, and 108–128; these read MSEL…AWKA, WWFA…ITLY, ILPG…LGWV, and VGYS…SPAF.

This sequence belongs to the OpgB family.

It is found in the cell inner membrane. The catalysed reaction is a phosphatidylglycerol + a membrane-derived-oligosaccharide D-glucose = a 1,2-diacyl-sn-glycerol + a membrane-derived-oligosaccharide 6-(glycerophospho)-D-glucose.. It functions in the pathway glycan metabolism; osmoregulated periplasmic glucan (OPG) biosynthesis. Transfers a phosphoglycerol residue from phosphatidylglycerol to the membrane-bound nascent glucan backbones. This is Phosphoglycerol transferase I from Salmonella choleraesuis (strain SC-B67).